The primary structure comprises 1494 residues: ABC multidrug transporter atrG (1494 aa).

Positions 1-11 (MSLLGTINPNL) are enriched in polar residues. 2 disordered regions span residues 1–48 (MSLL…RTSD) and 84–105 (FSVS…TLNP). Residue Asn-41 is glycosylated (N-linked (GlcNAc...) asparagine). Residues Asn-141 and Asn-340 are each glycosylated (N-linked (GlcNAc...) asparagine). An ABC transporter 1 domain is found at 162 to 416 (LQVGALFRAV…FTTMGFECPE (255 aa)). 2 helical membrane-spanning segments follow: residues 527 to 547 (LTMS…SVFY) and 561 to 581 (ALLF…ILTL). Asn-622 is a glycosylation site (N-linked (GlcNAc...) asparagine). The next 3 helical transmembrane spans lie at 636 to 656 (GPFF…SMLF), 669 to 689 (ALVP…FTIP), and 778 to 798 (GIMF…TEYI). Asn-835 carries N-linked (GlcNAc...) asparagine glycosylation. Residues 852-1095 (FHWQDVCYDI…LASYFERNGA (244 aa)) enclose the ABC transporter 2 domain. An ATP-binding site is contributed by 888 to 895 (GVSGAGKT). 5 consecutive transmembrane segments (helical) span residues 1191–1211 (YIYS…FSFF), 1227–1247 (IFML…NFVT), 1276–1296 (LPWN…PIGL), 1312–1332 (LMWL…HMMI), and 1351–1371 (LCLI…FWIF). 2 N-linked (GlcNAc...) asparagine glycosylation sites follow: Asn-1410 and Asn-1432. A helical membrane pass occupies residues 1463–1483 (FGIMWAFIVFNIAAAVFIYWL).

It belongs to the ABC transporter superfamily. ABCG family. PDR (TC 3.A.1.205) subfamily.

The protein localises to the cell membrane. The catalysed reaction is (R)-miconazole(in) + ATP + H2O = (R)-miconazole(out) + ADP + phosphate + H(+). Its function is as follows. Pleiotropic ABC efflux transporter involved in the basal level of azole susceptibility. Confers resistance to miconazole and clotrimazole. The protein is ABC multidrug transporter atrG of Aspergillus oryzae (strain ATCC 42149 / RIB 40) (Yellow koji mold).